Reading from the N-terminus, the 473-residue chain is MAQHDFAPAWLNFPTPPSSTKSSLNFEKHSENFSWTENRYDVNRRRHNSSDGFDSGIGRPNGGNFGRKEKNGWRTHGRNGTENINHRGGYHGGSSRSRSSIFHSGKSQGLHENNIPDNETGRKDDKRERKQFEAEDFPSLNPEYEREPNQNKSLAAGVWEYPPNPKSRTQRMLVIKKGNTKDLQLSGFPVVGNLQSQPVKNGTGPSVYKGLVPKPAAPPTKPTQWKSQTKENKVGTSFPHESTYGVGNFNAFKSTAKNFSPSTTSVKECNRSNSSSPVDKLNQQPRLTKLTRMRTDKKSEFLKALKRDRVEEEHEDESHVGSEKDDDSFNLHNSNSTHQERDINRNFDENEIPQENGNASVISQQIIRSSAFPQTDVLSSSLEAEHRLLKEMGWQEDSENDETCAPLTEDEMREFQVISEQLQKNGLRKNGILKNGLICDFKFGPWKNSTFKPTIENDDTETSSSDTSDDDDV.

5 disordered regions span residues 1–26, 44–163, 196–240, 258–286, and 305–342; these read MAQH…SLNF, RRRH…EYPP, SQPV…SFPH, NFSP…QQPR, and LKRD…QERD. Phosphoserine is present on Ser-49. Arg-87 bears the Omega-N-methylarginine mark. The segment covering 93–107 has biased composition (low complexity); it reads GSSRSRSSIFHSGKS. Positions 119 to 133 are enriched in basic and acidic residues; it reads ETGRKDDKRERKQFE. Phosphoserine is present on residues Ser-274, Ser-276, Ser-322, and Ser-381. Positions 305 to 329 are enriched in basic and acidic residues; the sequence is LKRDRVEEEHEDESHVGSEKDDDSF. A disordered region spans residues 444–473; that stretch reads GPWKNSTFKPTIENDDTETSSSDTSDDDDV. Acidic residues predominate over residues 456–473; it reads ENDDTETSSSDTSDDDDV.

Belongs to the vasculin family. Interacts with GTF2B, GTF2F2, RNA polymerase II and TBP.

The protein resides in the nucleus. Functionally, functions as a GC-rich promoter-specific transactivating transcription factor. This is Vasculin (GPBP1) from Bos taurus (Bovine).